The primary structure comprises 130 residues: Protein ApaG (130 aa).

The ApaG domain maps to 3-127 (SQTTRDIEVT…FSLDSPHEKP (125 aa)).

In Paramagnetospirillum magneticum (strain ATCC 700264 / AMB-1) (Magnetospirillum magneticum), this protein is Protein ApaG.